The primary structure comprises 210 residues: Probable nicotinate-nucleotide adenylyltransferase (210 aa).

The protein belongs to the NadD family.

It carries out the reaction nicotinate beta-D-ribonucleotide + ATP + H(+) = deamido-NAD(+) + diphosphate. The protein operates within cofactor biosynthesis; NAD(+) biosynthesis; deamido-NAD(+) from nicotinate D-ribonucleotide: step 1/1. Its function is as follows. Catalyzes the reversible adenylation of nicotinate mononucleotide (NaMN) to nicotinic acid adenine dinucleotide (NaAD). This chain is Probable nicotinate-nucleotide adenylyltransferase, found in Methylococcus capsulatus (strain ATCC 33009 / NCIMB 11132 / Bath).